The chain runs to 78 residues: Cytochrome c-551 (78 aa).

Residues Cys14, Cys17, His18, and Met55 each contribute to the heme c site.

In terms of processing, binds 1 heme c group covalently per subunit.

This chain is Cytochrome c-551, found in Halorhodospira halophila (Ectothiorhodospira halophila).